The sequence spans 447 residues: MDEEYDVIVLGTGLTECILSGIMSVNGKKVLHMDRNPYYGGESSSITPLEELYKRFQILEGPPESMGRGRDWNVDLIPKFLMANGQLVKMLLYTEVTRYLDFKVVEGSFVYKGGKIYKVPSTETEALASNLMGMFEKRRFRKFLVFVANFDENDPKTFEGVDPQNTSMRDVYRKFDLGQDVIDFTGHALALYRTDDYLDQPCLETINRIKLYSESLARYGKSPYLYPLYGLGELPQGFARLSAIYGGTYMLNKPVDDIIMENGKVVGVKSEGEVARCKQLICDPSYIPDRVQKAGQVIRIICILSHPIKNTNDANSCQIIIPQNQVNRKSDIYVCMISYAHNVAAQGKYIAIASTTVETAEPEKEVEPALELLEPIDQKFVAISDLYEPIDDGSESQVFCSCSYDATTHFETTCNDIKDIYKRMAGSAFDFENMKRKQNDVFGEADQ.

Serine 427 carries the phosphoserine modification.

This sequence belongs to the Rab GDI family. Interacts with RHOH. Interacts with the non-phosphorylated forms of RAB1A, RAB3A, RAB5A, RAB5B, RAB5C, RAB8A, RAB8B, RAB12, RAB35, and RAB43. Interacts with RAB10. As to expression, high expression in brain, lower in other tissues.

It is found in the cytoplasm. The protein resides in the golgi apparatus. It localises to the trans-Golgi network. Its function is as follows. Regulates the GDP/GTP exchange reaction of most Rab proteins by inhibiting the dissociation of GDP from them, and the subsequent binding of GTP to them. Promotes the dissociation of GDP-bound Rab proteins from the membrane and inhibits their activation. Promotes the dissociation of RAB1A, RAB3A, RAB5A and RAB10 from membranes. The polypeptide is Rab GDP dissociation inhibitor alpha (Gdi1) (Mus musculus (Mouse)).